A 208-amino-acid chain; its full sequence is GTP cyclohydrolase-2 (208 aa).

49-53 serves as a coordination point for GTP; sequence RLHSE. Residues Cys-54, Cys-65, and Cys-67 each contribute to the Zn(2+) site. GTP contacts are provided by residues Gln-70, 92–94, and Thr-114; that span reads EGR. Residue Asp-126 is the Proton acceptor of the active site. Arg-128 (nucleophile) is an active-site residue. 2 residues coordinate GTP: Thr-149 and Lys-154.

It belongs to the GTP cyclohydrolase II family. Zn(2+) is required as a cofactor.

It catalyses the reaction GTP + 4 H2O = 2,5-diamino-6-hydroxy-4-(5-phosphoribosylamino)-pyrimidine + formate + 2 phosphate + 3 H(+). It participates in cofactor biosynthesis; riboflavin biosynthesis; 5-amino-6-(D-ribitylamino)uracil from GTP: step 1/4. In terms of biological role, catalyzes the conversion of GTP to 2,5-diamino-6-ribosylamino-4(3H)-pyrimidinone 5'-phosphate (DARP), formate and pyrophosphate. The polypeptide is GTP cyclohydrolase-2 (Azotobacter vinelandii (strain DJ / ATCC BAA-1303)).